A 146-amino-acid polypeptide reads, in one-letter code: Horcolin (146 aa).

Positions 1–21 (MSKPVKIGPWGGNGGSERDVQ) are disordered. A Jacalin-type lectin domain is found at 4-146 (PVKIGPWGGN…LDAIGFYITP (143 aa)).

It belongs to the jacalin lectin family.

The protein localises to the secreted. Its subcellular location is the extracellular space. The protein resides in the apoplast. Mannose-specific lectin. Has a weak agglutinating activity against rabbit erythrocytes. This chain is Horcolin, found in Hordeum vulgare (Barley).